Consider the following 418-residue polypeptide: Ankyrin repeat domain-containing protein 61 (418 aa).

ANK repeat units lie at residues 27 to 57, 74 to 103, 131 to 160, 166 to 195, 199 to 228, 233 to 272, 276 to 305, and 309 to 342; these read ALHS…NQPL, QPIF…DPEV, TRIQ…QVNA, NKHS…QVNA, SSMT…NVNC, TGNT…QVNA, EGQT…NVNI, and NGES…PLRL.

This is Ankyrin repeat domain-containing protein 61 (Ankrd61) from Rattus norvegicus (Rat).